Here is a 143-residue protein sequence, read N- to C-terminus: Photosystem I reaction center subunit IV A, chloroplastic (143 aa).

The N-terminal 44 residues, 1–44 (MAMTTASTVFVLPANVTSVAGASSSRSSVSFLPMRNAGSRLVVR), are a transit peptide targeting the chloroplast. The interval 43–85 (VRAAEDPAPASSSSKDSPAAAAAPDGATATKPKPPPIGPKRGS) is disordered. Residues 48-73 (DPAPASSSSKDSPAAAAAPDGATATK) are compositionally biased toward low complexity.

Belongs to the PsaE family. In terms of processing, 2 isoforms may exist. With or without the N-terminal alanine.

The protein localises to the plastid. Its subcellular location is the chloroplast thylakoid membrane. Stabilizes the interaction between PsaC and the PSI core, assists the docking of the ferredoxin to PSI and interacts with ferredoxin-NADP oxidoreductase. The polypeptide is Photosystem I reaction center subunit IV A, chloroplastic (PSAE1) (Arabidopsis thaliana (Mouse-ear cress)).